We begin with the raw amino-acid sequence, 159 residues long: MKIRIGHGFDVHKFGEPRPLILCGVEVPYETGLVAHSDGDVVLHAISDAILGAMALGDIGKHFPDTDAAYKGADSRVLLRHCYALAKAKGFELGNLDVTIIAQAPKMAPHIEDMRQVLAADLNADVADINVKATTTEKLGFTGRKEGIAVEAVVLLSRQ.

Residues D10 and H12 each contribute to the a divalent metal cation site. Residues 10–12 (DVH) and 36–37 (HS) each bind 4-CDP-2-C-methyl-D-erythritol 2-phosphate. A divalent metal cation is bound at residue H44. Residues 58 to 60 (DIG), 63 to 67 (FPDTD), 102 to 108 (AQAPKMA), 134 to 137 (TTTE), F141, 141 to 144 (FTGR), and R144 contribute to the 4-CDP-2-C-methyl-D-erythritol 2-phosphate site.

The protein belongs to the IspF family. In terms of assembly, homotrimer. The cofactor is a divalent metal cation.

The enzyme catalyses 4-CDP-2-C-methyl-D-erythritol 2-phosphate = 2-C-methyl-D-erythritol 2,4-cyclic diphosphate + CMP. It functions in the pathway isoprenoid biosynthesis; isopentenyl diphosphate biosynthesis via DXP pathway; isopentenyl diphosphate from 1-deoxy-D-xylulose 5-phosphate: step 4/6. Functionally, involved in the biosynthesis of isopentenyl diphosphate (IPP) and dimethylallyl diphosphate (DMAPP), two major building blocks of isoprenoid compounds. Catalyzes the conversion of 4-diphosphocytidyl-2-C-methyl-D-erythritol 2-phosphate (CDP-ME2P) to 2-C-methyl-D-erythritol 2,4-cyclodiphosphate (ME-CPP) with a corresponding release of cytidine 5-monophosphate (CMP). The sequence is that of 2-C-methyl-D-erythritol 2,4-cyclodiphosphate synthase from Shewanella oneidensis (strain ATCC 700550 / JCM 31522 / CIP 106686 / LMG 19005 / NCIMB 14063 / MR-1).